Here is a 194-residue protein sequence, read N- to C-terminus: HTH-type transcriptional regulator BetI (194 aa).

In terms of domain architecture, HTH tetR-type spans 8-68 (EIRRAQLIDA…ATMRHVLRDL (61 aa)). The segment at residues 31–50 (TLASVAQRANISTGIVSHYF) is a DNA-binding region (H-T-H motif).

It participates in amine and polyamine biosynthesis; betaine biosynthesis via choline pathway [regulation]. Its function is as follows. Repressor involved in the biosynthesis of the osmoprotectant glycine betaine. It represses transcription of the choline transporter BetT and the genes of BetAB involved in the synthesis of glycine betaine. This Burkholderia cenocepacia (strain ATCC BAA-245 / DSM 16553 / LMG 16656 / NCTC 13227 / J2315 / CF5610) (Burkholderia cepacia (strain J2315)) protein is HTH-type transcriptional regulator BetI.